The chain runs to 197 residues: Holliday junction branch migration complex subunit RuvA (197 aa).

The segment at 1 to 64 is domain I; sequence MYEYIKGKYI…EDFIGVYGFL (64 aa). The interval 65–143 is domain II; the sequence is TKDELSMFKL…IDILEEDDEQ (79 aa). Positions 144–148 are flexible linker; the sequence is TINKV. A domain III region spans residues 149 to 197; sequence TDDKKVLEAVAALITLGYSEKEANKVINSCDKNNSLEQIIKEALKYLMK.

It belongs to the RuvA family. As to quaternary structure, homotetramer. Forms an RuvA(8)-RuvB(12)-Holliday junction (HJ) complex. HJ DNA is sandwiched between 2 RuvA tetramers; dsDNA enters through RuvA and exits via RuvB. An RuvB hexamer assembles on each DNA strand where it exits the tetramer. Each RuvB hexamer is contacted by two RuvA subunits (via domain III) on 2 adjacent RuvB subunits; this complex drives branch migration. In the full resolvosome a probable DNA-RuvA(4)-RuvB(12)-RuvC(2) complex forms which resolves the HJ.

It is found in the cytoplasm. In terms of biological role, the RuvA-RuvB-RuvC complex processes Holliday junction (HJ) DNA during genetic recombination and DNA repair, while the RuvA-RuvB complex plays an important role in the rescue of blocked DNA replication forks via replication fork reversal (RFR). RuvA specifically binds to HJ cruciform DNA, conferring on it an open structure. The RuvB hexamer acts as an ATP-dependent pump, pulling dsDNA into and through the RuvAB complex. HJ branch migration allows RuvC to scan DNA until it finds its consensus sequence, where it cleaves and resolves the cruciform DNA. This is Holliday junction branch migration complex subunit RuvA from Clostridium botulinum (strain 657 / Type Ba4).